The chain runs to 278 residues: Pyrroline-5-carboxylate reductase 2 (278 aa).

This sequence belongs to the pyrroline-5-carboxylate reductase family.

It is found in the cytoplasm. It catalyses the reaction L-proline + NADP(+) = (S)-1-pyrroline-5-carboxylate + NADPH + 2 H(+). The catalysed reaction is L-proline + NAD(+) = (S)-1-pyrroline-5-carboxylate + NADH + 2 H(+). It participates in amino-acid biosynthesis; L-proline biosynthesis; L-proline from L-glutamate 5-semialdehyde: step 1/1. Functionally, catalyzes the reduction of 1-pyrroline-5-carboxylate (PCA) to L-proline. In Bacillus subtilis (strain 168), this protein is Pyrroline-5-carboxylate reductase 2 (proI).